Here is a 242-residue protein sequence, read N- to C-terminus: ATP synthase subunit b (242 aa).

Helical transmembrane passes span 8 to 28 and 87 to 107; these read VLPFLLVLLFAFAPLALASAP and LMDLFWRVLNFAVLMAILIKF.

Belongs to the ATPase B chain family. In terms of assembly, F-type ATPases have 2 components, F(1) - the catalytic core - and F(0) - the membrane proton channel. F(1) has five subunits: alpha(3), beta(3), gamma(1), delta(1), epsilon(1). F(0) has three main subunits: a(1), b(2) and c(10-14). The alpha and beta chains form an alternating ring which encloses part of the gamma chain. F(1) is attached to F(0) by a central stalk formed by the gamma and epsilon chains, while a peripheral stalk is formed by the delta and b chains.

The protein resides in the cell inner membrane. F(1)F(0) ATP synthase produces ATP from ADP in the presence of a proton or sodium gradient. F-type ATPases consist of two structural domains, F(1) containing the extramembraneous catalytic core and F(0) containing the membrane proton channel, linked together by a central stalk and a peripheral stalk. During catalysis, ATP synthesis in the catalytic domain of F(1) is coupled via a rotary mechanism of the central stalk subunits to proton translocation. Functionally, component of the F(0) channel, it forms part of the peripheral stalk, linking F(1) to F(0). This chain is ATP synthase subunit b, found in Desulfotalea psychrophila (strain LSv54 / DSM 12343).